The following is a 370-amino-acid chain: Actin-related protein 2/3 complex subunit 1A (370 aa).

6 WD repeats span residues 6–45 (FLLE…WVKA), 50–89 (EHNG…WKPT), 140–179 (PIRS…VDEK), 202–241 (GTGG…QVST), 244–284 (TEFL…TFVS), and 322–365 (LHQN…SSIQ).

Belongs to the WD repeat ARPC1 family. As to quaternary structure, probable component of the Arp2/3 complex in which it may replace ARPC1B. In addition to its role in the cytoplasmic cytoskeleton, the Arp2/3 complex also promotes actin polymerization in the nucleus, thereby regulating gene transcription and repair of damaged DNA.

Its subcellular location is the cytoplasm. The protein resides in the cytoskeleton. It is found in the nucleus. Functionally, probably functions as a component of the Arp2/3 complex which is involved in regulation of actin polymerization and together with an activating nucleation-promoting factor (NPF) mediates the formation of branched actin networks. The chain is Actin-related protein 2/3 complex subunit 1A (ARPC1A) from Homo sapiens (Human).